Reading from the N-terminus, the 106-residue chain is Toxin-like structure LSTX-D3 (106 aa).

An N-terminal signal peptide occupies residues 1–20 (MMKVLVVVALLVTLISYSSS). Positions 21-41 (EGIDDLEADELLSLMANEQTR) are excised as a propeptide. Cystine bridges form between cysteine 45-cysteine 60, cysteine 52-cysteine 69, cysteine 59-cysteine 85, and cysteine 71-cysteine 83.

It belongs to the neurotoxin 19 (CSTX) family. 02 (D7) subfamily. Expressed by the venom gland.

The protein resides in the secreted. This is Toxin-like structure LSTX-D3 from Lycosa singoriensis (Wolf spider).